We begin with the raw amino-acid sequence, 104 residues long: L-rhamnose mutarotase (104 aa).

Tyrosine 18 is a binding site for substrate. Histidine 22 functions as the Proton donor in the catalytic mechanism. Substrate contacts are provided by residues tyrosine 41 and 76–77 (WW).

The protein belongs to the rhamnose mutarotase family. Homodimer.

It is found in the cytoplasm. The enzyme catalyses alpha-L-rhamnose = beta-L-rhamnose. The protein operates within carbohydrate metabolism; L-rhamnose metabolism. Functionally, involved in the anomeric conversion of L-rhamnose. The protein is L-rhamnose mutarotase of Shigella sonnei (strain Ss046).